A 490-amino-acid chain; its full sequence is Myocilin (490 aa).

The N-terminal stretch at 1-18 (MPAVQLLLLAGLVWGAGA) is a signal peptide. Residues 55–170 (SAIQDLQRDS…QEVARLARGQ (116 aa)) are a coiled coil. The disordered stretch occupies residues 168 to 187 (RGQCPQARDTSQDVPAGSRE). The Olfactomedin-like domain maps to 230–489 (GCGELVWVGQ…MVTYDIKLSK (260 aa)). A disulfide bridge links C231 with C419. 5 residues coordinate Ca(2+): D366, N414, A415, I463, and D464. A Microbody targeting signal motif is present at residues 488 to 490 (SKI).

Homodimer (via N-terminus). Can also form higher oligomers. Interacts with OLFM3, FN1, NRCAM, GLDN and NFASC. Interacts (via N-terminus) with MYL2. Interacts with SFRP1, FRZB, FZD7, FZD10, FZD1 and WIF1; regulates Wnt signaling. Interacts with SNTA1; regulates muscle hypertrophy. Interacts with ERBB2 and ERBB3; activates ERBB2-ERBB3 signaling pathway. Interacts with SNCG; affects its secretion and its aggregation. Palmitoylated. In terms of processing, glycosylated. Post-translationally, undergoes a calcium-dependent proteolytic cleavage at Arg-212 by CAPN2 in the endoplasmic reticulum. The result is the production of two fragments, one of 35 kDa containing the C-terminal olfactomedin-like domain, and another of 20 kDa containing the N-terminal leucine zipper-like domain. Detected in eye aqueous humor (at protein level).

It is found in the secreted. Its subcellular location is the golgi apparatus. It localises to the cytoplasmic vesicle. The protein localises to the extracellular space. The protein resides in the extracellular matrix. It is found in the extracellular exosome. Its subcellular location is the mitochondrion. It localises to the mitochondrion intermembrane space. The protein localises to the mitochondrion inner membrane. The protein resides in the mitochondrion outer membrane. It is found in the rough endoplasmic reticulum. Its subcellular location is the cell projection. It localises to the cilium. The protein localises to the endoplasmic reticulum. In terms of biological role, secreted glycoprotein regulating the activation of different signaling pathways in adjacent cells to control different processes including cell adhesion, cell-matrix adhesion, cytoskeleton organization and cell migration. Promotes substrate adhesion, spreading and formation of focal contacts. Negatively regulates cell-matrix adhesion and stress fiber assembly through Rho protein signal transduction. Modulates the organization of actin cytoskeleton by stimulating the formation of stress fibers through interactions with components of Wnt signaling pathways. Promotes cell migration through activation of PTK2 and the downstream phosphatidylinositol 3-kinase signaling. Plays a role in bone formation and promotes osteoblast differentiation in a dose-dependent manner through mitogen-activated protein kinase signaling. Mediates myelination in the peripheral nervous system through ERBB2/ERBB3 signaling. Plays a role as a regulator of muscle hypertrophy through the components of dystrophin-associated protein complex. Involved in positive regulation of mitochondrial depolarization. Plays a role in neurite outgrowth. May participate in the obstruction of fluid outflow in the trabecular meshwork. This is Myocilin from Oryctolagus cuniculus (Rabbit).